Consider the following 1159-residue polypeptide: Protocadherin-17 (1159 aa).

Positions 1–17 (MYLSICCCFLLWAPALT) are cleaved as a signal peptide. 6 consecutive Cadherin domains span residues 18–132 (LKNL…APSF), 133–243 (SSDQ…SPVF), 244–351 (EAPS…APSI), 353–472 (FVSV…PPRF), 473–583 (TKGL…APVI), and 589–695 (QNDT…VPRV). The Extracellular portion of the chain corresponds to 18 to 707 (LKNLNYSVPE…EQHHWDMSLP (690 aa)). N22 carries N-linked (GlcNAc...) asparagine glycosylation. The Cell attachment site motif lies at 186–188 (RGD). N-linked (GlcNAc...) asparagine glycosylation is found at N266, N439, N453, N504, N566, and N590. A helical membrane pass occupies residues 708 to 728 (LIVTLSTISIILLAAMITIAV). The Cytoplasmic portion of the chain corresponds to 729–1159 (KCKRENKEIR…RGNDPVAVRK (431 aa)). Disordered regions lie at residues 858 to 909 (NFPA…KGSC) and 1108 to 1132 (SRDSSEMGAVLEQLDHPNRDLGRES). A compositionally biased stretch (polar residues) spans 867 to 879 (GSRQQFVQSSSTF). Basic and acidic residues-rich tracts occupy residues 880 to 895 (KDPERASLRDSGHGDS) and 1120 to 1132 (QLDHPNRDLGRES).

Its subcellular location is the cell membrane. Functionally, potential calcium-dependent cell-adhesion protein. The sequence is that of Protocadherin-17 (PCDH17) from Homo sapiens (Human).